The chain runs to 102 residues: Large ribosomal subunit protein bL21 (102 aa).

The protein belongs to the bacterial ribosomal protein bL21 family. As to quaternary structure, part of the 50S ribosomal subunit. Contacts protein L20.

This protein binds to 23S rRNA in the presence of protein L20. This chain is Large ribosomal subunit protein bL21, found in Stenotrophomonas maltophilia (strain K279a).